The sequence spans 334 residues: Aspartate carbamoyltransferase catalytic subunit (334 aa).

2 residues coordinate carbamoyl phosphate: Arg71 and Thr72. Position 99 (Lys99) interacts with L-aspartate. Carbamoyl phosphate contacts are provided by Arg121, His151, and Gln154. L-aspartate is bound by residues Arg184 and Arg239. Gly280 and Pro281 together coordinate carbamoyl phosphate.

Belongs to the aspartate/ornithine carbamoyltransferase superfamily. ATCase family. As to quaternary structure, heterododecamer (2C3:3R2) of six catalytic PyrB chains organized as two trimers (C3), and six regulatory PyrI chains organized as three dimers (R2).

It carries out the reaction carbamoyl phosphate + L-aspartate = N-carbamoyl-L-aspartate + phosphate + H(+). It participates in pyrimidine metabolism; UMP biosynthesis via de novo pathway; (S)-dihydroorotate from bicarbonate: step 2/3. Functionally, catalyzes the condensation of carbamoyl phosphate and aspartate to form carbamoyl aspartate and inorganic phosphate, the committed step in the de novo pyrimidine nucleotide biosynthesis pathway. The chain is Aspartate carbamoyltransferase catalytic subunit from Pseudomonas fluorescens (strain SBW25).